Consider the following 283-residue polypeptide: 1-deoxypentalenic acid 11-beta-hydroxylase (283 aa).

A substrate-binding site is contributed by R117. H135 and D137 together coordinate Fe cation. 2-oxoglutarate-binding positions include 135-137 (HQD) and W151. Residue R186 coordinates substrate. Fe cation is bound at residue H224. Residues S226 and R238 each coordinate 2-oxoglutarate. Residues 260–283 (WPESAKDASKGILSKITGTPTTAE) are disordered.

It belongs to the PhyH family. The cofactor is Fe cation. L-ascorbate is required as a cofactor.

The enzyme catalyses 1-deoxypentalenate + 2-oxoglutarate + O2 = 1-deoxy-11beta-hydroxypentalenate + succinate + CO2. It participates in antibiotic biosynthesis; pentalenolactone biosynthesis. Functionally, catalyzes the conversion of 1-deoxypentalenic acid to 11-beta-hydroxy-1-deoxypentalenic acid in the biosynthesis of pentalenolactone antibiotic. The sequence is that of 1-deoxypentalenic acid 11-beta-hydroxylase (penH) from Streptomyces exfoliatus (Streptomyces hydrogenans).